Consider the following 247-residue polypeptide: Segregation and condensation protein A (247 aa).

The protein belongs to the ScpA family. In terms of assembly, component of a cohesin-like complex composed of ScpA, ScpB and the Smc homodimer, in which ScpA and ScpB bind to the head domain of Smc. The presence of the three proteins is required for the association of the complex with DNA.

It is found in the cytoplasm. In terms of biological role, participates in chromosomal partition during cell division. May act via the formation of a condensin-like complex containing Smc and ScpB that pull DNA away from mid-cell into both cell halves. In Bacillus cereus (strain ATCC 10987 / NRS 248), this protein is Segregation and condensation protein A.